The primary structure comprises 700 residues: Methionine synthase reductase (700 aa).

The region spanning 4–147 (FLLLYATQRG…VVEPWIDGLW (144 aa)) is the Flavodoxin-like domain. FMN is bound by residues 10–14 (TQRGQ) and 93–124 (LLGL…QHFY). The tract at residues 168 to 247 (TLAQASDAPL…SSLSIPAVSP (80 aa)) is hinge. Phosphoserine is present on residues Ser-173 and Ser-190. An FAD-binding FR-type domain is found at 272-534 (DPIFQVPISK…PRATNSFHLP (263 aa)). Residue Lys-292 participates in NADP(+) binding. FAD is bound by residues 452-455 (RPYS) and 488-491 (GVCT). NADP(+) contacts are provided by residues 611 to 612 (SR), 626 to 628 (YVQ), and Asp-661. Position 699 (Trp-699) interacts with FAD.

As to quaternary structure, forms a multiprotein complex with MMACHC, MMADHC and MTR. It depends on FAD as a cofactor. Requires FMN as cofactor.

It localises to the cytoplasm. It carries out the reaction 2 methylcob(III)alamin-[methionine synthase] + 2 S-adenosyl-L-homocysteine + NADP(+) + H(+) = 2 cob(II)alamin-[methionine synthase] + 2 S-adenosyl-L-methionine + NADPH. It catalyses the reaction 2 cob(II)alamin + A + 2 H2O + 2 H(+) = 2 aquacob(III)alamin + AH2. Key enzyme in methionine and folate homeostasis responsible for the reactivation of methionine synthase (MTR/MS) activity by catalyzing the reductive methylation of MTR-bound cob(II)alamin. Cobalamin (vitamin B12) forms a complex with MTR to serve as an intermediary in methyl transfer reactions that cycles between MTR-bound methylcob(III)alamin and MTR bound-cob(I)alamin forms, and occasional oxidative escape of the cob(I)alamin intermediate during the catalytic cycle leads to the inactive cob(II)alamin species. The processing of cobalamin in the cytosol occurs in a multiprotein complex composed of at least MMACHC, MMADHC, MTRR and MTR which may contribute to shuttle safely and efficiently cobalamin towards MTR in order to produce methionine. Also necessary for the utilization of methyl groups from the folate cycle, thereby affecting transgenerational epigenetic inheritance. Also acts as a molecular chaperone for methionine synthase by stabilizing apoMTR and incorporating methylcob(III)alamin into apoMTR to form the holoenzyme. Also serves as an aquacob(III)alamin reductase by reducing aquacob(III)alamin to cob(II)alamin; this reduction leads to stimulation of the conversion of apoMTR and aquacob(III)alamin to MTR holoenzyme. The sequence is that of Methionine synthase reductase (Mtrr) from Rattus norvegicus (Rat).